Here is a 474-residue protein sequence, read N- to C-terminus: MSKKLHIKTWGCQMNEYDSSKMADLLGEYQGYTLTEEAEEADILLLNTCSIREKAQEKVFHQLGRWKTLKDKNPDLIIGVGGCVASQEGKAIKDRAHCVDIIFGPQTLHRLPDMIEQVRRGEKAVIDVSFPEIEKFDRLPEPRAEGPTAFVSIMEGCSKYCSFCVVPYTRGEEVSRPSDDIILEIAQLAEQGVREVNLLGQNVNAYRGATHDGGICTFAELLRYVAAIDGIDRIRFTTSHPIEFTQDIIDVYEDTPELVSFLHLPVQSGSDRILTAMKRGHMAIEYKSIIRRLRKARPDIQISSDFIIGFPGETKEDFADTMKLIEDVAFDHSFSFIYSARPGTPAADLPDDVDMEEKKQRLAILQDRITQQAMRYSRHMMGTVQRILVEGPSVKNPMELRGRTENNRVVNFEGLPKHIGSFVDVEIVDVYTNSLRGKFIRGEDEMDLRRNLRPSDILAKHKQDDDLGVTQFKP.

Residues K3 to R120 enclose the MTTase N-terminal domain. C12, C49, C83, C157, C161, and C164 together coordinate [4Fe-4S] cluster. A Radical SAM core domain is found at R143–R375. The TRAM domain occupies R378 to R441.

This sequence belongs to the methylthiotransferase family. MiaB subfamily. As to quaternary structure, monomer. [4Fe-4S] cluster serves as cofactor.

It is found in the cytoplasm. The enzyme catalyses N(6)-dimethylallyladenosine(37) in tRNA + (sulfur carrier)-SH + AH2 + 2 S-adenosyl-L-methionine = 2-methylsulfanyl-N(6)-dimethylallyladenosine(37) in tRNA + (sulfur carrier)-H + 5'-deoxyadenosine + L-methionine + A + S-adenosyl-L-homocysteine + 2 H(+). In terms of biological role, catalyzes the methylthiolation of N6-(dimethylallyl)adenosine (i(6)A), leading to the formation of 2-methylthio-N6-(dimethylallyl)adenosine (ms(2)i(6)A) at position 37 in tRNAs that read codons beginning with uridine. The sequence is that of tRNA-2-methylthio-N(6)-dimethylallyladenosine synthase from Shewanella sp. (strain MR-4).